The following is a 306-amino-acid chain: Acetyl-coenzyme A carboxylase carboxyl transferase subunit beta (306 aa).

The region spanning 27–296 is the CoA carboxyltransferase N-terminal domain; it reads LWHKCPSCEA…PKFVAAPIEP (270 aa). Zn(2+)-binding residues include C31, C34, C50, and C53. The C4-type zinc-finger motif lies at 31–53; the sequence is CPSCEAVLYRPELEKTLDVCPKC.

Belongs to the AccD/PCCB family. As to quaternary structure, acetyl-CoA carboxylase is a heterohexamer composed of biotin carboxyl carrier protein (AccB), biotin carboxylase (AccC) and two subunits each of ACCase subunit alpha (AccA) and ACCase subunit beta (AccD). It depends on Zn(2+) as a cofactor.

It is found in the cytoplasm. It carries out the reaction N(6)-carboxybiotinyl-L-lysyl-[protein] + acetyl-CoA = N(6)-biotinyl-L-lysyl-[protein] + malonyl-CoA. It participates in lipid metabolism; malonyl-CoA biosynthesis; malonyl-CoA from acetyl-CoA: step 1/1. In terms of biological role, component of the acetyl coenzyme A carboxylase (ACC) complex. Biotin carboxylase (BC) catalyzes the carboxylation of biotin on its carrier protein (BCCP) and then the CO(2) group is transferred by the transcarboxylase to acetyl-CoA to form malonyl-CoA. The chain is Acetyl-coenzyme A carboxylase carboxyl transferase subunit beta from Pseudomonas fluorescens (strain Pf0-1).